A 203-amino-acid polypeptide reads, in one-letter code: Histidine biosynthesis bifunctional protein HisIE (203 aa).

Residues 1-114 (MLTEQQRREL…FGDTAHQWLF (114 aa)) are phosphoribosyl-AMP cyclohydrolase. A phosphoribosyl-ATP pyrophosphohydrolase region spans residues 115–203 (LYQLEQLLAE…VIENLRKRHQ (89 aa)).

It in the N-terminal section; belongs to the PRA-CH family. The protein in the C-terminal section; belongs to the PRA-PH family.

It localises to the cytoplasm. It catalyses the reaction 1-(5-phospho-beta-D-ribosyl)-ATP + H2O = 1-(5-phospho-beta-D-ribosyl)-5'-AMP + diphosphate + H(+). The enzyme catalyses 1-(5-phospho-beta-D-ribosyl)-5'-AMP + H2O = 1-(5-phospho-beta-D-ribosyl)-5-[(5-phospho-beta-D-ribosylamino)methylideneamino]imidazole-4-carboxamide. It participates in amino-acid biosynthesis; L-histidine biosynthesis; L-histidine from 5-phospho-alpha-D-ribose 1-diphosphate: step 2/9. Its pathway is amino-acid biosynthesis; L-histidine biosynthesis; L-histidine from 5-phospho-alpha-D-ribose 1-diphosphate: step 3/9. In Escherichia coli O6:H1 (strain CFT073 / ATCC 700928 / UPEC), this protein is Histidine biosynthesis bifunctional protein HisIE.